We begin with the raw amino-acid sequence, 525 residues long: Neuropilin and tolloid-like protein 2 (525 aa).

The N-terminal stretch at 1–22 is a signal peptide; it reads MALERLCSVLKVLLITVLVVEG. At 23–347 the chain is on the extracellular side; sequence IAVAQKTQDG…GVFEQITKTH (325 aa). 7 disulfide bridges follow: cysteine 45-cysteine 72, cysteine 100-cysteine 122, cysteine 177-cysteine 207, cysteine 234-cysteine 256, cysteine 297-cysteine 309, cysteine 304-cysteine 322, and cysteine 316-cysteine 331. 2 CUB domains span residues 45-159 and 177-292; these read CGIW…YSFI and CQFE…FTSF. In terms of domain architecture, LDL-receptor class A spans 296-332; the sequence is PCTSSTFFCHSNMCINNSLVCNGVQNCAYPWDENHCK. An N-linked (GlcNAc...) asparagine glycan is attached at asparagine 311. The chain crosses the membrane as a helical span at residues 348–368; that stretch reads GTIIGITSGIVLVLLIISILV. At 369 to 525 the chain is on the cytoplasmic side; that stretch reads QVKQPRKKVM…SAQASISIDF (157 aa). Serine 409 carries the phosphoserine modification.

Interacts with GRIK2 and GRIK3, but neither with AMPA-nor with NMDA-sensitive glutamate receptors. N-glycosylated.

It localises to the membrane. In terms of biological role, accessory subunit of neuronal kainate-sensitive glutamate receptors, GRIK2 and GRIK3. Increases kainate-receptor channel activity, slowing the decay kinetics of the receptors, without affecting their expression at the cell surface, and increasing the open probability of the receptor channels. Modulates the agonist sensitivity of kainate receptors. Slows the decay of kainate receptor-mediated excitatory postsynaptic currents (EPSCs), thus directly influencing synaptic transmission. The sequence is that of Neuropilin and tolloid-like protein 2 (NETO2) from Homo sapiens (Human).